The following is a 514-amino-acid chain: HTH-type transcriptional regulatory protein TyrR (514 aa).

Positions 2 to 72 (RLEVFCEDRL…GVTDVRTVPW (71 aa)) constitute an ACT domain. The 43-residue stretch at 78–120 (EHLALSALLEALPEPVLSLDMKSKIEMANPASCQLFAHTQDRM) folds into the PAS domain. Positions 206–428 (IIAVSAKMKH…VKNAIYRALT (223 aa)) constitute a Sigma-54 factor interaction domain. ATP is bound by residues 234-241 (GNTGTGKD) and 290-299 (ANGGSVLLDE). Positions 482 to 502 (STRKLAKRLGVSHTAIANKLR) form a DNA-binding region, H-T-H motif.

As to quaternary structure, homodimer. In presence of tyrosine (or high concentrations of phenylalanine or tryptophan) and ATP, it self-associates to form an hexamer.

The protein resides in the cytoplasm. Dual transcriptional regulator of the TyrR regulon, which includes a number of genes coding for proteins involved in the biosynthesis or transport of the three aromatic amino acids, phenylalanine, tyrosine and tryptophan. These three aromatic amino acids act as effectors which bind to the TyrR protein to form an active regulatory protein. Acts by binding specifically to TyrR boxes in the promoter region of the target genes. The sequence is that of HTH-type transcriptional regulatory protein TyrR from Citrobacter braakii.